Consider the following 291-residue polypeptide: Methionine aminopeptidase (291 aa).

A substrate-binding site is contributed by histidine 65. A divalent metal cation contacts are provided by aspartate 85, aspartate 96, and histidine 155. Histidine 163 contacts substrate. Residues glutamate 188 and glutamate 276 each contribute to the a divalent metal cation site.

Belongs to the peptidase M24A family. Methionine aminopeptidase archaeal type 2 subfamily. In terms of assembly, monomer. Co(2+) serves as cofactor. Requires Zn(2+) as cofactor. The cofactor is Mn(2+). Fe(2+) is required as a cofactor.

It carries out the reaction Release of N-terminal amino acids, preferentially methionine, from peptides and arylamides.. Removes the N-terminal methionine from nascent proteins. The N-terminal methionine is often cleaved when the second residue in the primary sequence is small and uncharged (Met-Ala-, Cys, Gly, Pro, Ser, Thr, or Val). The protein is Methionine aminopeptidase of Archaeoglobus fulgidus (strain ATCC 49558 / DSM 4304 / JCM 9628 / NBRC 100126 / VC-16).